A 743-amino-acid chain; its full sequence is Probable TonB-dependent receptor BfrD (743 aa).

Residues methionine 1 to alanine 30 form the signal peptide. Residues proline 62–lysine 168 enclose the TBDR plug domain. The TBDR beta-barrel domain occupies glutamine 173–tyrosine 743. Residues tyrosine 726–tyrosine 743 carry the TonB C-terminal box motif.

It belongs to the TonB-dependent receptor family.

Its subcellular location is the cell outer membrane. Its function is as follows. Probably involved in iron transport. The protein is Probable TonB-dependent receptor BfrD (bfrD) of Bordetella pertussis (strain Tohama I / ATCC BAA-589 / NCTC 13251).